The sequence spans 1010 residues: Translation initiation factor IF-2 (1010 aa).

2 disordered regions span residues 54 to 350 (KGLA…FEDD) and 364 to 420 (PSFT…RPES). Positions 57–70 (ASSTSKNSTGQRES) are enriched in polar residues. Positions 112-124 (ISPPRPPVKPLVA) are enriched in pro residues. Residues 145–155 (HSPSVKETPTE) show a composition bias toward polar residues. The span at 200 to 258 (DRPRGEKRERGESENAPSPERRVGLAKPEKPTLNRKPDGKSPKLAEPAREVRETVELKR) shows a compositional bias: basic and acidic residues. The segment covering 378–389 (TAKAAPPGTPTA) has biased composition (low complexity). A compositionally biased stretch (basic and acidic residues) spans 406-419 (KSERQEPQEEKRPE). The tr-type G domain occupies 502–675 (RRPPVVTIMG…LLVAEVEELV (174 aa)). Positions 511–518 (GHVDHGKT) are G1. 511-518 (GHVDHGKT) lines the GTP pocket. The interval 536 to 540 (GITQH) is G2. Positions 561–564 (DTPG) are G3. Residues 561–565 (DTPGH) and 615–618 (NKVD) each bind GTP. Positions 615–618 (NKVD) are G4. A G5 region spans residues 651–653 (SAL).

It belongs to the TRAFAC class translation factor GTPase superfamily. Classic translation factor GTPase family. IF-2 subfamily.

It localises to the cytoplasm. Its function is as follows. One of the essential components for the initiation of protein synthesis. Protects formylmethionyl-tRNA from spontaneous hydrolysis and promotes its binding to the 30S ribosomal subunits. Also involved in the hydrolysis of GTP during the formation of the 70S ribosomal complex. The chain is Translation initiation factor IF-2 from Microcystis aeruginosa (strain NIES-843 / IAM M-2473).